The chain runs to 120 residues: UPF0231 protein YacL (120 aa).

The protein belongs to the UPF0231 family.

The chain is UPF0231 protein YacL from Salmonella paratyphi A (strain ATCC 9150 / SARB42).